We begin with the raw amino-acid sequence, 147 residues long: Hemoglobin subunit delta (147 aa).

The 145-residue stretch at 3 to 147 folds into the Globin domain; sequence NLTAAEKTQV…VANALAHKYH (145 aa). 2 residues coordinate heme b: His-64 and His-93.

Belongs to the globin family. Heterotetramer of two delta chains and two alpha chains. In terms of tissue distribution, red blood cells.

This is Hemoglobin subunit delta (HBD) from Elephas maximus (Indian elephant).